Here is a 251-residue protein sequence, read N- to C-terminus: MVNAILSKKKKLVADGVFYAELNEFFTRELAEQGYAGVEVRKTPSKLEVIVKASNTQGVLGEQGRRIHELTSLIVKRFKLSPEGIAIYAERVEERGLSAAVQAEALKAKLLSGLPIRRAAYGVLRFAMGAGAKGVEVVISGKLRAARAKSQKYADGFMIHSGQPTRDFIDIAIRHVLMRQGVLGIKVKIMKDPAANRFGPRALPDAVKIAEAKDEDEVIPAPTVKSYKQTAEDETETDAPVEAEAEVEATA.

A KH type-2 domain is found at 22-93 (LNEFFTRELA…GIAIYAERVE (72 aa)). Residues 223 to 251 (TVKSYKQTAEDETETDAPVEAEAEVEATA) form a disordered region. A compositionally biased stretch (acidic residues) spans 232-251 (EDETETDAPVEAEAEVEATA).

It belongs to the universal ribosomal protein uS3 family. As to quaternary structure, component of the small ribosomal subunit. Mature ribosomes consist of a small (40S) and a large (60S) subunit. The 40S subunit contains about 32 different proteins and 1 molecule of RNA (18S). The 60S subunit contains 45 different proteins and 3 molecules of RNA (25S, 5.8S and 5S).

It localises to the cytoplasm. Component of the ribosome, a large ribonucleoprotein complex responsible for the synthesis of proteins in the cell. The small ribosomal subunit (SSU) binds messenger RNAs (mRNAs) and translates the encoded message by selecting cognate aminoacyl-transfer RNA (tRNA) molecules. The large subunit (LSU) contains the ribosomal catalytic site termed the peptidyl transferase center (PTC), which catalyzes the formation of peptide bonds, thereby polymerizing the amino acids delivered by tRNAs into a polypeptide chain. The nascent polypeptides leave the ribosome through a tunnel in the LSU and interact with protein factors that function in enzymatic processing, targeting, and the membrane insertion of nascent chains at the exit of the ribosomal tunnel. The polypeptide is Small ribosomal subunit protein uS3 (RPS3) (Candida albicans (strain SC5314 / ATCC MYA-2876) (Yeast)).